An 806-amino-acid polypeptide reads, in one-letter code: Transitional endoplasmic reticulum ATPase (806 aa).

Ala2 carries the post-translational modification N-acetylalanine. Phosphoserine is present on residues Ser3 and Ser7. A Glycyl lysine isopeptide (Lys-Gly) (interchain with G-Cter in SUMO2) cross-link involves residue Lys8. Ser13 carries the phosphoserine modification. Residue Lys18 forms a Glycyl lysine isopeptide (Lys-Gly) (interchain with G-Cter in SUMO2) linkage. Residue Ser37 is modified to Phosphoserine. Residue 247–253 (PGTGKTL) participates in ATP binding. Lys315 bears the N6,N6,N6-trimethyllysine; by VCPKMT mark. 2 residues coordinate ATP: Asn348 and His384. Phosphothreonine is present on Thr436. Ser462 carries the phosphoserine modification. Lys502 and Lys505 each carry N6-acetyllysine. 521-526 (GCGKTL) serves as a coordination point for ATP. Lys668 carries the N6-acetyllysine; alternate modification. An N6-succinyllysine; alternate modification is found at Lys668. Residue Ser702 is modified to Phosphoserine. Positions 708–727 (RRERERQTNPSAMEVEEDDP) are disordered. Lys754 carries the post-translational modification N6-acetyllysine. The interval 768–806 (FGSFRFPSGNQGGAGPSQGSGGGTGGSVYTEDNDDDLYG) is disordered. Residues Ser770, Ser775, and Ser787 each carry the phosphoserine modification. Gly residues predominate over residues 777–793 (NQGGAGPSQGSGGGTGG). The tract at residues 797-806 (TEDNDDDLYG) is interaction with UBXN6. Tyr805 is subject to Phosphotyrosine.

Belongs to the AAA ATPase family. In terms of assembly, homohexamer. Forms a ring-shaped particle of 12.5 nm diameter, that displays 6-fold radial symmetry. Part of a ternary complex containing STX5A, NSFL1C and VCP. NSFL1C forms a homotrimer that binds to one end of a VCP homohexamer. The complex binds to membranes enriched in phosphatidylethanolamine-containing lipids and promotes Golgi membrane fusion. Binds to a heterodimer of NPLOC4 and UFD1, binding to this heterodimer inhibits Golgi-membrane fusion. Interaction with VCIP135 leads to dissociation of the complex via ATP hydrolysis by VCP. Part of a ternary complex containing NPLOC4, UFD1 and VCP. Interacts with NSFL1C-like protein p37; the complex has membrane fusion activity and is required for Golgi and endoplasmic reticulum biogenesis. Interacts with SELENOS and SYVN1, as well as with DERL1 (via SHP-box motif), DERL2 and DERL3; which probably transfer misfolded proteins from the ER to VCP. Interacts with SVIP and DERL1. Component of a complex required to couple retrotranslocation, ubiquitination and deglycosylation composed of NGLY1, SAKS1, AMFR, VCP and RAD23B. Part of a complex composed of STUB1/CHIP, VCP/p97, CHRNA3, and UBXN2A that modulates the ubiquitination and endoplasmic reticulum-associated degradation (ERAD) of CHRNA3. Within the complex UBXN2A acts as a scaffold protein required for the interaction of CHRNA3 with VCP/p97, this interaction also inhibits CHRNA3 ubiquitination by STUB1/CHIP and subsequently ERAD. Interacts with UBXN2A (via UBX domain); the interaction is required for the interaction of CHRNA3 in the STUB1-VCP-UBXN2A complex. Directly interacts with UBXN4 and RNF19A. Interacts with CASR. Interacts with UBE4B and YOD1. Interacts with clathrin. Interacts with RNF103. Interacts with TRIM13 and TRIM21. Component of a VCP/p97-AMFR/gp78 complex that participates in the final step of the endoplasmic reticulum-associated degradation (ERAD) of HMGCR. Interacts directly with AMFR/gp78 (via its VIM). Interacts with RHBDD1 (via C-terminal domain). Interacts with SPRTN; leading to recruitment to stalled replication forks. Interacts with WASHC5. Interacts with UBOX5. Interacts (via N-terminus) with UBXN7, UBXN8, and probably several other UBX domain-containing proteins (via UBX domains); the interactions are mutually exclusive with VIM-dependent interactions such as those with AMFR and SELENOS. Forms a complex with UBQLN1 and UBXN4. Interacts (via the PIM motif) with RNF31 (via the PUB domain). Interacts with RIGI and RNF125; interaction takes place when RIGI is ubiquitinated via 'Lys-63'-linked ubiquitin on its CARD domains, leading to recruit RNF125 and promote ubiquitination and degradation of RIGI. Interacts with BAG6. Interacts with UBXN10. Interacts with UBXN6; the interaction with UBXN6 is direct and competitive with UFD1. Forms a ternary complex with CAV1 and UBXN6. Interacts with PLAA, UBXN6 and YOD1; may form a complex involved in macroautophagy. Interacts with ANKZF1. Interacts with ubiquitin-binding protein FAF1. Interacts with ZFAND2B (via VIM motif); the interaction is direct. Interacts with ZFAND1 (via its ubiquitin-like region); this interaction occurs in an arsenite-dependent manner. Interacts with CCDC47. Interacts with LMBR1L and UBAC2. Interacts with ATXN3. Interacts with TEX264; bridging VCP to covalent DNA-protein cross-links (DPCs). It depends on Mg(2+) as a cofactor. ISGylated. In terms of processing, methylation at Lys-315 catalyzed by VCPKMT is increased in the presence of ASPSCR1. Lys-315 methylation may decrease ATPase activity. Post-translationally, phosphorylated by tyrosine kinases in response to T-cell antigen receptor activation. Phosphorylated in mitotic cells.

Its subcellular location is the cytoplasm. It localises to the cytosol. It is found in the endoplasmic reticulum. The protein resides in the nucleus. The protein localises to the stress granule. It catalyses the reaction ATP + H2O = ADP + phosphate + H(+). Its function is as follows. Necessary for the fragmentation of Golgi stacks during mitosis and for their reassembly after mitosis. Involved in the formation of the transitional endoplasmic reticulum (tER). The transfer of membranes from the endoplasmic reticulum to the Golgi apparatus occurs via 50-70 nm transition vesicles which derive from part-rough, part-smooth transitional elements of the endoplasmic reticulum (tER). Vesicle budding from the tER is an ATP-dependent process. The ternary complex containing UFD1, VCP and NPLOC4 binds ubiquitinated proteins and is necessary for the export of misfolded proteins from the ER to the cytoplasm, where they are degraded by the proteasome. The NPLOC4-UFD1-VCP complex regulates spindle disassembly at the end of mitosis and is necessary for the formation of a closed nuclear envelope. Regulates E3 ubiquitin-protein ligase activity of RNF19A. Component of the VCP/p97-AMFR/gp78 complex that participates in the final step of the sterol-mediated ubiquitination and endoplasmic reticulum-associated degradation (ERAD) of HMGCR. Mediates the endoplasmic reticulum-associated degradation of CHRNA3 in cortical neurons as part of the STUB1-VCP-UBXN2A complex. Involved in endoplasmic reticulum stress-induced pre-emptive quality control, a mechanism that selectively attenuates the translocation of newly synthesized proteins into the endoplasmic reticulum and reroutes them to the cytosol for proteasomal degradation. Involved in clearance process by mediating G3BP1 extraction from stress granules. Also involved in DNA damage response: recruited to double-strand breaks (DSBs) sites in a RNF8- and RNF168-dependent manner and promotes the recruitment of TP53BP1 at DNA damage sites. Recruited to stalled replication forks by SPRTN: may act by mediating extraction of DNA polymerase eta (POLH) to prevent excessive translesion DNA synthesis and limit the incidence of mutations induced by DNA damage. Together with SPRTN metalloprotease, involved in the repair of covalent DNA-protein cross-links (DPCs) during DNA synthesis. Involved in interstrand cross-link repair in response to replication stress by mediating unloading of the ubiquitinated CMG helicase complex. Mediates extraction of PARP1 trapped to chromatin: recognizes and binds ubiquitinated PARP1 and promotes its removal. Required for cytoplasmic retrotranslocation of stressed/damaged mitochondrial outer-membrane proteins and their subsequent proteasomal degradation. Essential for the maturation of ubiquitin-containing autophagosomes and the clearance of ubiquitinated protein by autophagy. Acts as a negative regulator of type I interferon production by interacting with RIGI: interaction takes place when RIGI is ubiquitinated via 'Lys-63'-linked ubiquitin on its CARD domains, leading to recruit RNF125 and promote ubiquitination and degradation of RIGI. May play a role in the ubiquitin-dependent sorting of membrane proteins to lysosomes where they undergo degradation. May more particularly play a role in caveolins sorting in cells. By controlling the steady-state expression of the IGF1R receptor, indirectly regulates the insulin-like growth factor receptor signaling pathway. The polypeptide is Transitional endoplasmic reticulum ATPase (VCP) (Sus scrofa (Pig)).